A 451-amino-acid polypeptide reads, in one-letter code: Inositol-pentakisphosphate 2-kinase (451 aa).

Position 1 is an N-acetylmethionine (methionine 1). Residues glycine 19 to asparagine 22 and arginine 40 each bind ATP. Substrate contacts are provided by arginine 45 and arginine 130. ATP-binding positions include asparagine 147–histidine 149 and glutamate 166–lysine 168. The EXKPK motif signature appears at glutamate 166–lysine 170. Residues lysine 170, lysine 200, and asparagine 238 each coordinate substrate. Residue arginine 241 coordinates ATP. The Zn(2+) site is built by histidine 320, cysteine 330, cysteine 333, and histidine 346. Residue aspartate 368 participates in substrate binding. Aspartate 407 lines the ATP pocket. 3 residues coordinate substrate: lysine 411, arginine 415, and tyrosine 419.

This sequence belongs to the IPK1 type 2 family. Zn(2+) is required as a cofactor. As to expression, strongly expressed in leaves and cauline leaves. Weakly expressed in siliques and flowers. In flower, it is expressed in the major organs of developing flower buds. Strongly expressed in sepals, petals, in the male and female organs of immature and mature flower buds. Strongly expressed in the gynoecium and carpels which are fused to form the gynoecium. Also expressed in the transmitting tissue and ovules.

It catalyses the reaction 1D-myo-inositol 1,3,4,5,6-pentakisphosphate + ATP = 1D-myo-inositol hexakisphosphate + ADP + H(+). Functionally, phosphorylates Ins(1,3,4,5,6)P5 at position 2 to form Ins(1,2,3,4,5,6)P6 (InsP6 or phytate). Phytate is a regulator of intracellular signaling, a highly abundant animal antinutrient, and a phosphate store in plant seeds. Also phosphorylates Ins(1,3,4,6)P4 and Ins(1,4,5,6)P4 to produce Ins(1,2,3,4,6)P5 and Ins(1,2,4,5,6)P5. In Arabidopsis thaliana (Mouse-ear cress), this protein is Inositol-pentakisphosphate 2-kinase (IPK1).